Consider the following 200-residue polypeptide: HTH-type transcriptional regulator BetI (200 aa).

One can recognise an HTH tetR-type domain in the interval 8–68 (DIRKPQLVQA…ETMREILRQL (61 aa)). Residues 31-50 (SIALISKEAGVSTGIINHYF) constitute a DNA-binding region (H-T-H motif).

It functions in the pathway amine and polyamine biosynthesis; betaine biosynthesis via choline pathway [regulation]. Repressor involved in the biosynthesis of the osmoprotectant glycine betaine. It represses transcription of the choline transporter BetT and the genes of BetAB involved in the synthesis of glycine betaine. This chain is HTH-type transcriptional regulator BetI, found in Vibrio atlanticus (strain LGP32) (Vibrio splendidus (strain Mel32)).